The following is a 520-amino-acid chain: Sterile alpha motif domain-containing protein 3 (520 aa).

An SAM domain is found at 4–71 (WSVEQVCSWL…KYKQNTQGLK (68 aa)). The interval 85-114 (TEAARDYRDEESSSPARHGEQMPSFYPAEN) is disordered.

This Homo sapiens (Human) protein is Sterile alpha motif domain-containing protein 3 (SAMD3).